A 74-amino-acid chain; its full sequence is Large ribosomal subunit protein bL31 (74 aa).

Positions 16, 18, 38, and 41 each coordinate Zn(2+).

It belongs to the bacterial ribosomal protein bL31 family. Type A subfamily. Part of the 50S ribosomal subunit. Zn(2+) serves as cofactor.

Its function is as follows. Binds the 23S rRNA. In Acinetobacter baylyi (strain ATCC 33305 / BD413 / ADP1), this protein is Large ribosomal subunit protein bL31.